A 302-amino-acid polypeptide reads, in one-letter code: Bifunctional protein FolD (302 aa).

NADP(+) is bound by residues 165 to 167, S190, and I231; that span reads GRS.

Belongs to the tetrahydrofolate dehydrogenase/cyclohydrolase family. As to quaternary structure, homodimer.

It catalyses the reaction (6R)-5,10-methylene-5,6,7,8-tetrahydrofolate + NADP(+) = (6R)-5,10-methenyltetrahydrofolate + NADPH. The catalysed reaction is (6R)-5,10-methenyltetrahydrofolate + H2O = (6R)-10-formyltetrahydrofolate + H(+). It functions in the pathway one-carbon metabolism; tetrahydrofolate interconversion. Its function is as follows. Catalyzes the oxidation of 5,10-methylenetetrahydrofolate to 5,10-methenyltetrahydrofolate and then the hydrolysis of 5,10-methenyltetrahydrofolate to 10-formyltetrahydrofolate. In Prochlorococcus marinus (strain MIT 9303), this protein is Bifunctional protein FolD.